We begin with the raw amino-acid sequence, 660 residues long: Glycine betaine transporter (660 aa).

The Cytoplasmic segment spans residues 1-13 (MPSKTSSRFANIN). Residues 14-34 (PNVFVSTIMIIAIFLAIVILA) traverse the membrane as a helical segment. The Periplasmic portion of the chain corresponds to 35-52 (PDAFELLTQQLKNWITES). A helical transmembrane segment spans residues 53–73 (FSWFYVLSVAFFLIVLGYIAC). Residues 74 to 93 (SSSGKIKLGPDHSQPDYSNS) lie on the Cytoplasmic side of the membrane. Residues 94-114 (SWFAMLFTAGMGIGLMFFGIA) traverse the membrane as a helical segment. At 115-139 (EPIMHYVSPPSGEPETILAAQQSMR) the chain is on the periplasmic side. Residues 140–160 (VTFFHWGLHAWGIYAIVALSL) traverse the membrane as a helical segment. Topologically, residues 161 to 195 (SYFAYRHDLPLKIRSSLYPLIGKKIYGPMGDAVDT) are cytoplasmic. A helical membrane pass occupies residues 196-216 (FATIGTIFGVATTLGFGVTQI). Over 217–230 (SSGLNYLFGFEPTS) the chain is Periplasmic. A helical transmembrane segment spans residues 231–251 (FSKVVLIIIVSAMAALSVGLG). At 252–263 (LDKGVKRLAELN) the chain is on the cytoplasmic side. The helical transmembrane segment at 264–284 (LVLAVTLLAFVFFTSATVYLL) threads the bilayer. Topologically, residues 285–316 (QTTIQNTGQYISNLFEMTFNLYAYQPNGWIGG) are periplasmic. Residues 317–337 (WTIMYWAWWISWSPFVGMFIA) form a helical membrane-spanning segment. At 338 to 347 (RVSRGRTIRE) the chain is on the cytoplasmic side. Residues 348-368 (FIIGVMLIPTGFTLIWMGFMG) traverse the membrane as a helical segment. Topologically, residues 369–401 (NAGLYSILHDGNLSLLNAVQRDSSVALFEFLHS) are periplasmic. A helical transmembrane segment spans residues 402–422 (LPFSGVMSLLATVLVVLFFVT). Residues 423–446 (SADSGALVVDYLTAKSEDSPVWQR) are Cytoplasmic-facing. Residues 447-467 (LFWIVVMAGLAIILLLAGGLT) traverse the membrane as a helical segment. Over 468-471 (ALQS) the chain is Periplasmic. A helical transmembrane segment spans residues 472 to 492 (ATIMSALPFTFIMLLICWGLI). The Cytoplasmic portion of the chain corresponds to 493–660 (KALRIDSTKM…LSVMRAQTGN (168 aa)).

This sequence belongs to the BCCT transporter (TC 2.A.15) family.

The protein localises to the cell inner membrane. Uptake is activated by NaCl, KCl or mannose gradients across the cell membrane. Inhibited by the protonophore 3,3',4',5-tetrachlorosalicylanilide (TCS). In terms of biological role, energy-dependent uptake of glycine betaine in response to high salinity. The sequence is that of Glycine betaine transporter from Acinetobacter baylyi (strain ATCC 33305 / BD413 / ADP1).